The following is a 267-amino-acid chain: 3-methyl-2-oxobutanoate hydroxymethyltransferase (267 aa).

The Mg(2+) site is built by aspartate 46 and aspartate 85. 3-methyl-2-oxobutanoate is bound by residues aspartate 46–serine 47, aspartate 85, and lysine 115. Mg(2+) is bound at residue glutamate 117. Catalysis depends on glutamate 184, which acts as the Proton acceptor.

This sequence belongs to the PanB family. Homodecamer; pentamer of dimers. It depends on Mg(2+) as a cofactor.

It localises to the cytoplasm. It carries out the reaction 3-methyl-2-oxobutanoate + (6R)-5,10-methylene-5,6,7,8-tetrahydrofolate + H2O = 2-dehydropantoate + (6S)-5,6,7,8-tetrahydrofolate. It participates in cofactor biosynthesis; (R)-pantothenate biosynthesis; (R)-pantoate from 3-methyl-2-oxobutanoate: step 1/2. In terms of biological role, catalyzes the reversible reaction in which hydroxymethyl group from 5,10-methylenetetrahydrofolate is transferred onto alpha-ketoisovalerate to form ketopantoate. This Geotalea daltonii (strain DSM 22248 / JCM 15807 / FRC-32) (Geobacter daltonii) protein is 3-methyl-2-oxobutanoate hydroxymethyltransferase.